The sequence spans 259 residues: Bisphosphoglycerate mutase (259 aa).

Ser2 is modified (N-acetylserine). Substrate is bound by residues 10–17 (RHGEGAWN), 23–24 (CS), Arg62, 89–92 (ERHY), Arg100, and 116–117 (RR). The active-site Tele-phosphohistidine intermediate is His11. Glu89 serves as the catalytic Proton donor/acceptor. Thr122 is modified (phosphothreonine). Substrate is bound at residue 189–190 (GN).

This sequence belongs to the phosphoglycerate mutase family. BPG-dependent PGAM subfamily. In terms of assembly, homodimer.

The catalysed reaction is (2R)-3-phospho-glyceroyl phosphate = (2R)-2,3-bisphosphoglycerate + H(+). It carries out the reaction (2R)-2-phosphoglycerate = (2R)-3-phosphoglycerate. At alkaline pH BPGM favors the synthase reaction; however, at lower pH the phosphatase reaction is dominant. Inhibited by citrate. Plays a major role in regulating hemoglobin oxygen affinity by controlling the levels of its allosteric effector 2,3-bisphosphoglycerate (2,3-BPG). Also exhibits mutase (EC 5.4.2.11) activity. This chain is Bisphosphoglycerate mutase (BPGM), found in Bos taurus (Bovine).